A 369-amino-acid chain; its full sequence is Transaldolase (369 aa).

Residue Lys140 is the Schiff-base intermediate with substrate of the active site.

Belongs to the transaldolase family. Type 2 subfamily.

The protein resides in the cytoplasm. The enzyme catalyses D-sedoheptulose 7-phosphate + D-glyceraldehyde 3-phosphate = D-erythrose 4-phosphate + beta-D-fructose 6-phosphate. Its pathway is carbohydrate degradation; pentose phosphate pathway; D-glyceraldehyde 3-phosphate and beta-D-fructose 6-phosphate from D-ribose 5-phosphate and D-xylulose 5-phosphate (non-oxidative stage): step 2/3. Functionally, transaldolase is important for the balance of metabolites in the pentose-phosphate pathway. In Parafrankia sp. (strain EAN1pec), this protein is Transaldolase.